The following is a 277-amino-acid chain: Large ribosomal subunit protein uL2 (277 aa).

The disordered stretch occupies residues valine 223–arginine 277. The span at threonine 253–arginine 277 shows a compositional bias: basic residues.

It belongs to the universal ribosomal protein uL2 family. In terms of assembly, part of the 50S ribosomal subunit. Forms a bridge to the 30S subunit in the 70S ribosome.

In terms of biological role, one of the primary rRNA binding proteins. Required for association of the 30S and 50S subunits to form the 70S ribosome, for tRNA binding and peptide bond formation. It has been suggested to have peptidyltransferase activity; this is somewhat controversial. Makes several contacts with the 16S rRNA in the 70S ribosome. This chain is Large ribosomal subunit protein uL2, found in Halothermothrix orenii (strain H 168 / OCM 544 / DSM 9562).